A 265-amino-acid polypeptide reads, in one-letter code: MSHASDPKKAGAHGDKSLVVEHLRKEYVRGKAVLKDISFTVSGQSTTAIIGPSGTGKSTLLRCINRLIEPTAGRILVSGEDVCALKGTALREARRRIGMVFQEYNLVERLSVMENVLCGRLGYISPWRAWLRKFPQEDIDRAFDLLDMVGLADFARARADELSGGQRQRVGIARAVMQEPHILLADEPTSSLDPKTSVEIMELLRAVAEKRDIPVLVNIHDVTLGRRFSDRVIGMCKGEVLFDDVPSALQDDHLKQIYGGEEWLQ.

The 245-residue stretch at 18–262 (LVVEHLRKEY…HLKQIYGGEE (245 aa)) folds into the ABC transporter domain. Position 51–58 (51–58 (GPSGTGKS)) interacts with ATP.

This sequence belongs to the ABC transporter superfamily. Phosphonates importer (TC 3.A.1.9.1) family. As to quaternary structure, the complex is composed of two ATP-binding proteins (PhnC), two transmembrane proteins (PhnE) and a solute-binding protein (PhnD).

Its subcellular location is the cell inner membrane. The enzyme catalyses phosphonate(out) + ATP + H2O = phosphonate(in) + ADP + phosphate + H(+). Part of the ABC transporter complex PhnCDE involved in phosphonates import. Responsible for energy coupling to the transport system. The protein is Phosphonates import ATP-binding protein PhnC of Nitratidesulfovibrio vulgaris (strain ATCC 29579 / DSM 644 / CCUG 34227 / NCIMB 8303 / VKM B-1760 / Hildenborough) (Desulfovibrio vulgaris).